We begin with the raw amino-acid sequence, 174 residues long: 16S rRNA aminocarboxypropyltransferase (174 aa).

Residues T26, L73, L97, and S116 each contribute to the S-adenosyl-L-methionine site.

Belongs to the TDD superfamily. TSR3 family.

The protein localises to the cytoplasm. The catalysed reaction is an N(1)-methylpseudouridine in rRNA + S-adenosyl-L-methionine = N(1)-methyl-N(3)-[(3S)-3-amino-3-carboxypropyl]pseudouridine in rRNA + S-methyl-5'-thioadenosine + H(+). Functionally, aminocarboxypropyltransferase that catalyzes the aminocarboxypropyl transfer on pseudouridine corresponding to position 914 in M.jannaschii 16S rRNA. It constitutes the last step in biosynthesis of the hypermodified N1-methyl-N3-(3-amino-3-carboxypropyl) pseudouridine (m1acp3-Psi). This Methanosarcina acetivorans (strain ATCC 35395 / DSM 2834 / JCM 12185 / C2A) protein is 16S rRNA aminocarboxypropyltransferase.